The following is a 537-amino-acid chain: MAWPGTGPSSRGAPGGVGLRLGLLLQFLLLLRPTLGFGDEEERRCDPIRIAMCQNLGYNVTKMPNLVGHELQTDAELQLTTFTPLIQYGCSSQLQFFLCSVYVPMCTEKINIPIGPCGGMCLSVKRRCEPVLREFGFAWPDTLNCSKFPPQNDHNHMCMEGPGDEEVPLPHKTPIQPGEECHSVGSNSDQYIWVKRSLNCVLKCGYDAGLYSRSAKEFTDIWMAVWASLCFISTTFTVLTFLIDSSRFSYPERPIIFLSMCYNIYSIAYIVRLTVGRERISCDFEEAAEPVLIQEGLKNTGCAIIFLLMYFFGMASSIWWVILTLTWFLAAGLKWGHEAIEMHSSYFHIAAWAIPAVKTIVILIMRLVDADELTGLCYVGNQNLDALTGFVVAPLFTYLVIGTLFIAAGLVALFKIRSNLQKDGTKTDKLERLMVKIGVFSVLYTVPATCVIACYFYEISNWALFRYSADDSNMAVEMLKIFMSLLVGITSGMWIWSAKTLHTWQKCSNRLVNSGKVKREKRGNGWVKPGKGNETVV.

The first 36 residues, 1-36 (MAWPGTGPSSRGAPGGVGLRLGLLLQFLLLLRPTLG), serve as a signal peptide directing secretion. Residues 37–212 (FGDEEERRCD…KCGYDAGLYS (176 aa)) are Extracellular-facing. The FZ domain maps to 40-161 (EEERRCDPIR…NDHNHMCMEG (122 aa)). 8 disulfides stabilise this stretch: Cys-45–Cys-106, Cys-53–Cys-99, Cys-90–Cys-128, Cys-117–Cys-158, Cys-121–Cys-145, Cys-181–Cys-200, Cys-204–Cys-282, and Cys-302–Cys-377. Asn-59 carries an N-linked (GlcNAc...) asparagine glycan. Asn-144 is a glycosylation site (N-linked (GlcNAc...) asparagine). Residues 213-243 (RSAKEFTDIWMAVWASLCFISTTFTVLTFLI) form a helical membrane-spanning segment. Topologically, residues 244-249 (DSSRFS) are cytoplasmic. Residues 250–275 (YPERPIIFLSMCYNIYSIAYIVRLTV) traverse the membrane as a helical segment. Topologically, residues 276–299 (GRERISCDFEEAAEPVLIQEGLKN) are extracellular. Residues 300–333 (TGCAIIFLLMYFFGMASSIWWVILTLTWFLAAGL) traverse the membrane as a helical segment. Residues 334 to 336 (KWG) are Cytoplasmic-facing. Residues 337 to 365 (HEAIEMHSSYFHIAAWAIPAVKTIVILIM) traverse the membrane as a helical segment. The Extracellular segment spans residues 366-383 (RLVDADELTGLCYVGNQN). Residues 384-410 (LDALTGFVVAPLFTYLVIGTLFIAAGL) form a helical membrane-spanning segment. Residues 411 to 431 (VALFKIRSNLQKDGTKTDKLE) are Cytoplasmic-facing. A helical transmembrane segment spans residues 432–460 (RLMVKIGVFSVLYTVPATCVIACYFYEIS). The Extracellular portion of the chain corresponds to 461 to 473 (NWALFRYSADDSN). The chain crosses the membrane as a helical span at residues 474–495 (MAVEMLKIFMSLLVGITSGMWI). The Cytoplasmic portion of the chain corresponds to 496 to 537 (WSAKTLHTWQKCSNRLVNSGKVKREKRGNGWVKPGKGNETVV). Positions 499-504 (KTLHTW) match the Lys-Thr-X-X-X-Trp motif, mediates interaction with the PDZ domain of Dvl family members motif. A PDZ-binding motif is present at residues 535–537 (TVV).

It belongs to the G-protein coupled receptor Fz/Smo family. Interacts with MAGI3 and NDP. Component of a complex, at least composed of TSPAN12, FZD4 and norrin (NDP). Interacts (via FZ domain) with TSKU; TSKU competes with WNT2B for binding to FZD4, inhibiting Wnt signaling and repressing peripheral eye development. Interacts with glypican GPC3. Ubiquitinated by ZNRF3, leading to its degradation by the proteasome. In terms of tissue distribution, expressed in chondrocytes.

The protein resides in the cell membrane. Receptor for Wnt proteins. Most frizzled receptors are coupled to the beta-catenin (CTNNB1) canonical signaling pathway, which leads to the activation of disheveled proteins, inhibition of GSK-3 kinase, nuclear accumulation of beta-catenin (CTNNB1) and activation of Wnt target genes. Plays a critical role in retinal vascularization by acting as a receptor for Wnt proteins and norrin (NDP). In retina, it can be activated by Wnt protein-binding and also by Wnt-independent signaling via binding of norrin (NDP), promoting in both cases beta-catenin (CTNNB1) accumulation and stimulation of LEF/TCF-mediated transcriptional programs. A second signaling pathway involving PKC and calcium fluxes has been seen for some family members, but it is not yet clear if it represents a distinct pathway or if it can be integrated in the canonical pathway, as PKC seems to be required for Wnt-mediated inactivation of GSK-3 kinase. Both pathways seem to involve interactions with G-proteins. May be involved in transduction and intercellular transmission of polarity information during tissue morphogenesis and/or in differentiated tissues. Activation by Wnt5A stimulates PKC activity via a G-protein-dependent mechanism. The sequence is that of Frizzled-4 (Fzd4) from Mus musculus (Mouse).